The primary structure comprises 507 residues: MEELQRYFKMDRSQKRDFLYPLLFQEYIYALAHDFGLTKLIPYESMQILSYENKYSSLIVKRLIIRMYQQKHLIIFDNDSKKKKFLGHNKNLYSQMISEGFAXIVKIPFALRLVSSYQGKEIEKSINLGSIHSTFPFLEDKFVHLNHVLDVLIPYPIHFELLVQNLRCWIQDASFLHLLRFFLYEYHNWNSFTTQKMKQNSLFFKENRRFFLFLYNFHVYESESIFLFLRKKSYHLRSISSIAFLDRTHFFGKIEHLKVVFRNDFHTMLWLFKDPFMHYFRYQGKSIMSSKGTPLLMKKWKYYLVNLWECHFYFWSQPNRIHINQLSNHFLNFLGYLSSVRPNPSVVRNQMLENAFIIDIAINKLNTLVPIIPLIGSLAKAKFCNLSGQSISKPAWTDSLDSDIIERFGRICRNFSHYYSGSSKKKPLYRIKYILRLSCARTLARKHKSTVRSFLKRLGSEFLEEFLIEEELVLSFILPKISSSSHRLSKERIWYFDIIRINDLMNL.

The protein belongs to the intron maturase 2 family. MatK subfamily.

The protein localises to the plastid. It localises to the chloroplast. Functionally, usually encoded in the trnK tRNA gene intron. Probably assists in splicing its own and other chloroplast group II introns. The polypeptide is Maturase K (Ranunculus acris (Meadow buttercup)).